The primary structure comprises 477 residues: Glutamate--tRNA ligase (477 aa).

A 'HIGH' region motif is present at residues 8–18 (PSPTGTLHIGT). Residues 247–251 (KLSKR) carry the 'KMSKS' region motif. K250 lines the ATP pocket.

It belongs to the class-I aminoacyl-tRNA synthetase family. Glutamate--tRNA ligase type 1 subfamily. In terms of assembly, monomer.

Its subcellular location is the cytoplasm. The catalysed reaction is tRNA(Glu) + L-glutamate + ATP = L-glutamyl-tRNA(Glu) + AMP + diphosphate. Functionally, catalyzes the attachment of glutamate to tRNA(Glu) in a two-step reaction: glutamate is first activated by ATP to form Glu-AMP and then transferred to the acceptor end of tRNA(Glu). This Synechococcus sp. (strain CC9605) protein is Glutamate--tRNA ligase.